The chain runs to 403 residues: S-arrestin (403 aa).

The segment at 11–19 (HVIFKKVSR) is interaction with RHO. Phosphothreonine is present on Thr-231. The segment at 381–403 (RQNLKDTGENTEGKKDEDAGQDE) is disordered.

The protein belongs to the arrestin family. Monomer. Homodimer. Homotetramer. Interacts with RHO (via the phosphorylated C-terminus). As to expression, detected in retina (at protein level).

It localises to the cell projection. Its subcellular location is the cilium. The protein resides in the photoreceptor outer segment. It is found in the membrane. Functionally, binds to photoactivated, phosphorylated RHO and terminates RHO signaling via G-proteins by competing with G-proteins for the same binding site on RHO. May play a role in preventing light-dependent degeneration of retinal photoreceptor cells. This is S-arrestin (Sag) from Mus musculus (Mouse).